We begin with the raw amino-acid sequence, 439 residues long: Protein ABHD8 (439 aa).

Disordered stretches follow at residues 49–70 and 124–156; these read AGPAPAAAPPPPSSASSDAAQG and PAGSDGRLAPGSAGSGSGSGSGGRRRRARRPKR. Residues 136–145 show a composition bias toward gly residues; sequence AGSGSGSGSG. The span at 146 to 156 shows a compositional bias: basic residues; sequence GRRRRARRPKR. Residues 177 to 279 form the AB hydrolase-1 domain; it reads VLFFIHGVGG…HKVIMINGGG (103 aa). Catalysis depends on charge relay system residues serine 252, aspartate 370, and histidine 398.

It belongs to the AB hydrolase superfamily. As to quaternary structure, interacts with NLRP3 (via NACHT and LLR domains); this interaction is enhanced in the presence of NLRP3 inflammasome inducers, such as ATP, nigericin, silica, or alum. Interacts with ZDHHC12. (Microbial infection) Interacts with SARS-CoV-2 nucleoprotein N; this interaction disrupts the NLRP3-ABHD8 association, enhancing NLRP3 stability, ultimately leading to increased inflammasome activation.

It is found in the cytoplasm. Functionally, negatively regulates NLRP3-driven inflammation. Promotes NLRP3 degradation through the chaperone-mediated autophagy (CMA) pathway, hence attenuating inflammasome activation and IL1B secretion. Acts by recruiting palmitoyltransferase ZDHHC12 to NLRP3, facilitating NLRP3 palmitoylation and subsequent degradation. The chain is Protein ABHD8 from Homo sapiens (Human).